Reading from the N-terminus, the 358-residue chain is C-X-C chemokine receptor type 4-B (358 aa).

The important for chemokine binding and signaling stretch occupies residues 1 to 25 (MDGFSGGIDINIFDGNSTENGSGDF). The Extracellular segment spans residues 1–44 (MDGFSGGIDINIFDGNSTENGSGDFEDFIEPCFMQENSDFNRIF). N-linked (GlcNAc...) asparagine glycosylation is found at Asn-16 and Asn-20. 2 cysteine pairs are disulfide-bonded: Cys-32–Cys-281 and Cys-113–Cys-190. A helical membrane pass occupies residues 45-67 (LPTIYSFIFLLGIIGNGLVVVVM). Over 68–81 (GYQKKSRTMTDKYR) the chain is Cytoplasmic. The helical transmembrane segment at 82–103 (LHLSVADLLFVFTLPFWSVDAA) threads the bilayer. A chemokine binding region spans residues 98 to 101 (WSVD). Over 104-114 (IGWYFKEFLCK) the chain is Extracellular. Residues 115-134 (AVHVIYTVNLYSSVLILAFI) traverse the membrane as a helical segment. Residues 117–121 (HVIYT) are chemokine binding. The Cytoplasmic segment spans residues 135 to 158 (SLDRYLAIVHATNSQGSRKMLADK). The involved in dimerization; when bound to chemokine stretch occupies residues 139 to 151 (YLAIVHATNSQGS). Residues 159 to 178 (VVYAGVWLPALLLTVPDLVF) traverse the membrane as a helical segment. Residues 179 to 202 (ASVSNENGQFVCDRIYPIDNRETW) lie on the Extracellular side of the membrane. The tract at residues 190 to 194 (CDRIY) is chemokine binding, important for signaling. The helical transmembrane segment at 203–223 (TVGFRFLHITVGLILPGLIIL) threads the bilayer. At 224–248 (VCYCVIISKLSHSKGHQKRKALKTT) the chain is on the cytoplasmic side. A helical membrane pass occupies residues 249–268 (VILILAFFACWLPYYVCLTT). Residues 269 to 289 (DTFMMLGLVKADCIWENTLHK) lie on the Extracellular side of the membrane. The chain crosses the membrane as a helical span at residues 290–309 (AISITEALAFFHCCLNPILY). Over 310-358 (AFLGAKFKKSAQNAFTSVSRGSSLKILSKKRAGLSSVSTESESSSFHSS) the chain is Cytoplasmic. The segment at 338 to 358 (KKRAGLSSVSTESESSSFHSS) is disordered. The span at 344 to 358 (SSVSTESESSSFHSS) shows a compositional bias: low complexity.

It belongs to the G-protein coupled receptor 1 family. In terms of assembly, monomer. Can form dimers. Post-translationally, sulfation is required for efficient binding of cxcl12/sdf-1alpha and promotes its dimerization. In terms of processing, O- and N-glycosylated.

The protein localises to the cell membrane. The protein resides in the cytoplasm. It is found in the nucleus. Its subcellular location is the early endosome. It localises to the late endosome. The protein localises to the lysosome. Its function is as follows. Receptor for the C-X-C chemokine cxcl12/sdf-1. Transduces a signal by increasing the intracellular level of calcium ions. Signaling with cxcl12/sdf-1 mediates the directional movement of mesodermal cells during gastrulation. May play a role in the migration of embryonic presumptive primordial germ cells (pPGCs). May also be involved in regulating migration of hematopoietic stem cells into the larval liver. This chain is C-X-C chemokine receptor type 4-B (cxcr4-b), found in Xenopus laevis (African clawed frog).